The chain runs to 300 residues: Elongator complex protein 5 (300 aa).

Ser-252 is subject to Phosphoserine. The tract at residues 264-300 (QQALLRPRPGQATSHIFYEPDAYDDLDQEDPDDDLDI) is disordered. The segment covering 284–300 (DAYDDLDQEDPDDDLDI) has biased composition (acidic residues).

This sequence belongs to the ELP5 family. In terms of assembly, component of the elongator complex which consists of ELP1, ELP2, ELP3, ELP4, ELP5 and ELP6; in the complex, is required for optimal binding of ELP3 to ELP4. Post-translationally, tyrosine-phosphorylated. As to expression, ubiquitously expressed with high levels in heart, brain, liver, skeletal muscle and testis.

The protein resides in the nucleus. It is found in the cytoplasm. Its pathway is tRNA modification; 5-methoxycarbonylmethyl-2-thiouridine-tRNA biosynthesis. Its function is as follows. Component of the elongator complex which is required for multiple tRNA modifications, including mcm5U (5-methoxycarbonylmethyl uridine), mcm5s2U (5-methoxycarbonylmethyl-2-thiouridine), and ncm5U (5-carbamoylmethyl uridine). The elongator complex catalyzes formation of carboxymethyluridine in the wobble base at position 34 in tRNAs. Involved in cell migration. In Homo sapiens (Human), this protein is Elongator complex protein 5.